The chain runs to 420 residues: Pre-mRNA-splicing factor RBM22 (420 aa).

Ala-2 bears the N-acetylalanine mark. Ser-4 and Ser-102 each carry phosphoserine. Residues Lys-139 and Lys-149 each participate in a glycyl lysine isopeptide (Lys-Gly) (interchain with G-Cter in SUMO2) cross-link. Residues 159–186 (RNRPHICSFWVKGECKRGEECPYRHEKP) form a C3H1-type zinc finger. Lys-212 carries the post-translational modification N6-acetyllysine. Positions 232–305 (TTLYVGGLGD…RRLNVKWGRS (74 aa)) constitute an RRM domain. Residue Lys-290 forms a Glycyl lysine isopeptide (Lys-Gly) (interchain with G-Cter in SUMO2) linkage. Disordered regions lie at residues 303 to 343 (GRSQ…AAEE) and 371 to 420 (IAPP…HSSP). The span at 309 to 318 (RGKEKEKDGT) shows a compositional bias: basic and acidic residues.

Belongs to the SLT11 family. In terms of assembly, component of the pre-catalytic and catalytic spliceosome complexes. Component of the postcatalytic spliceosome P complex. Interacts with PDCD6; the interaction induces translocation of PDCD6 in the cytoplasm. Interacts with PPIL1.

Its subcellular location is the nucleus. The protein localises to the cytoplasm. Functionally, required for pre-mRNA splicing as component of the activated spliceosome. Involved in the first step of pre-mRNA splicing. Binds directly to the internal stem-loop (ISL) domain of the U6 snRNA and to the pre-mRNA intron near the 5' splice site during the activation and catalytic phases of the spliceosome cycle. Involved in both translocations of the nuclear SLU7 to the cytoplasm and the cytosolic calcium-binding protein PDCD6 to the nucleus upon cellular stress responses. The chain is Pre-mRNA-splicing factor RBM22 (Rbm22) from Rattus norvegicus (Rat).